The primary structure comprises 830 residues: P-selectin (830 aa).

Residues 1 to 41 (MANCQIAILYQRFQRVVFGISQLLCFSALISELTNQKEVAA) form the signal peptide. Over 42 to 771 (WTYHYSTKAY…QAGPLTIQEA (730 aa)) the chain is Extracellular. N-linked (GlcNAc...) asparagine glycosylation is found at Asn54 and Asn98. Residues 58-158 (KYCQNRYTDL…HCLKKKHALC (101 aa)) enclose the C-type lectin domain. Cystine bridges form between Cys60–Cys158, Cys131–Cys150, Cys163–Cys174, Cys168–Cys183, Cys185–Cys194, Cys200–Cys244, Cys230–Cys257, Cys262–Cys306, Cys292–Cys319, Cys324–Cys368, Cys354–Cys381, Cys386–Cys430, Cys416–Cys443, Cys448–Cys492, Cys478–Cys505, Cys510–Cys554, Cys540–Cys567, Cys572–Cys616, Cys602–Cys629, Cys642–Cys686, Cys672–Cys699, Cys704–Cys748, and Cys734–Cys761. Residues Glu121, Asn123, and Asn124 each contribute to the Ca(2+) site. Position 123 (Asn123) interacts with a carbohydrate. A carbohydrate contacts are provided by Glu133 and Asn146. Positions 146 and 147 each coordinate Ca(2+). The 37-residue stretch at 159 to 195 (YTASCQDMSCSKQGECLETIGNYTCSCYPGFYGPECE) folds into the EGF-like domain. N-linked (GlcNAc...) asparagine glycosylation occurs at Asn180. Sushi domains are found at residues 198–259 (RECG…QCLA), 260–321 (AQCP…VCKA), 322–383 (VQCQ…TCEA), 384–445 (ISCE…VCQA), 446–507 (LQCQ…ECQA), 508–569 (IPCT…MCEA), 570–631 (IKCP…TCKG), 640–701 (VQCP…ACRA), and 702–763 (VKCS…TCQA). Asn212 and Asn219 each carry an N-linked (GlcNAc...) asparagine glycan. Residue Asn411 is glycosylated (N-linked (GlcNAc...) asparagine). Asn460 is a glycosylation site (N-linked (GlcNAc...) asparagine). A glycan (N-linked (GlcNAc...) asparagine) is linked at Asn518. N-linked (GlcNAc...) asparagine glycosylation is present at Asn665. Asn716, Asn723, and Asn741 each carry an N-linked (GlcNAc...) asparagine glycan. A helical membrane pass occupies residues 772-795 (LTYFGGAVASTIGLIMGGTLLALL). At 796–830 (RKRFRQKDDGKCPLNPHSHLGTYGVFTNAAFDPSP) the chain is on the cytoplasmic side. The S-palmitoyl cysteine; alternate moiety is linked to residue Cys807. Cys807 is lipidated: S-stearoyl cysteine; alternate. The Endocytosis signal motif lies at 818–821 (YGVF). Positions 821 to 830 (FTNAAFDPSP) are interaction with SNX17.

Belongs to the selectin/LECAM family. In terms of assembly, interacts with SNX17. Interacts with SELPLG/PSGL1 and PODXL2 and mediates neutrophil adhesion and leukocyte rolling. This interaction requires the sialyl-Lewis X epitope of SELPLG and PODXL2, and specific tyrosine sulfation on SELPLG. Interacts (via C-type lectin domain) with alpha-IIb/beta3 integrin ITGA2B:ITGB3 and alpha-V/beta-3 integrin ITGAV:ITGB3. Interacts with alpha5/beta1 integrin ITGA5:ITGB1 and alpha4/beta1 integrin ITGA4:ITGB. Stored in the alpha-granules of platelets and Weibel-Palade bodies of endothelial cells. Upon cell activation by agonists, P-selectin is transported rapidly to the cell surface.

It localises to the cell membrane. Functionally, ca(2+)-dependent receptor for myeloid cells that binds to carbohydrates on neutrophils and monocytes. Mediates the interaction of activated endothelial cells or platelets with leukocytes. The ligand recognized is sialyl-Lewis X. Mediates rapid rolling of leukocyte rolling over vascular surfaces during the initial steps in inflammation through interaction with SELPLG. Mediates cell-cell interactions and cell adhesion via the interaction with integrin alpha-IIb/beta3 (ITGA2B:ITGB3) and integrin alpha-V/beta-3 (ITGAV:ITGB3). This chain is P-selectin (SELP), found in Homo sapiens (Human).